A 187-amino-acid polypeptide reads, in one-letter code: Elongation factor P (187 aa).

It belongs to the elongation factor P family.

Its subcellular location is the cytoplasm. The protein operates within protein biosynthesis; polypeptide chain elongation. Functionally, involved in peptide bond synthesis. Stimulates efficient translation and peptide-bond synthesis on native or reconstituted 70S ribosomes in vitro. Probably functions indirectly by altering the affinity of the ribosome for aminoacyl-tRNA, thus increasing their reactivity as acceptors for peptidyl transferase. In Acidothermus cellulolyticus (strain ATCC 43068 / DSM 8971 / 11B), this protein is Elongation factor P.